The primary structure comprises 334 residues: NAD-dependent protein deacylase sirtuin-6 (334 aa).

Ser2 is modified (N-acetylserine). Ser10 bears the Phosphoserine mark. One can recognise a Deacetylase sirtuin-type domain in the interval 27 to 272; sequence PEELERKVWE…CRLMKHLGLE (246 aa). Position 33 is an N6-acetyllysine (Lys33). Residues Ala53, Thr57, Phe64, Arg65, Trp71, Gln113, and His133 each contribute to the NAD(+) site. Residue His133 is the Proton acceptor of the active site. The Zn(2+) site is built by Cys141, Cys144, and Cys166. Lys170 participates in a covalent cross-link: Glycyl lysine isopeptide (Lys-Gly) (interchain with G-Cter in ubiquitin). Cys177 contacts Zn(2+). Gly214, Ser216, Asn240, Gln242, and Val258 together coordinate NAD(+). The tract at residues 312-334 is disordered; that stretch reads KSKPNSPILHRPPKRVKTEAAPS.

Belongs to the sirtuin family. Class IV subfamily. Homodimer; binds to nucleosomes and DNA ends as a homodimer. Interacts with RELA; interferes with RELA binding to target DNA. Interacts with SMARCA5; promoting recruitment of SMARCA5/SNF2H to double-strand breaks (DSBs) sites. Interacts with the mTORC2 complex; preventing the ability of SIRT6 to deacetylate FOXO1. Interacts with the CLOCK-BMAL1 complex; recruited by the CLOCK-BMAL1 complex to regulate expression of clock-controlled genes. Interacts with CSNK2A2; preventing CSNK2A2 localization to the nucleus. The cofactor is Zn(2+). Acetylated at Lys-33. Deacetylation at Lys-33 by SIRT1 promotes homomultimerization and binding to double-strand breaks (DSBs) sites. Post-translationally, phosphorylation at Ser-10 by MAPK8/JNK1 in response to oxidative stress stimulates the mono-ADP-ribosyltransferase activity on PARP1, leading to PARP1 recruitment to double-strand breaks (DSBs). In terms of processing, monoubiquitinated at Lys-170 by STUB1/CHIP, preventing its degradation by the proteasome. Sumoylated, leading to specifically decrease ability to deacetylate histone H3 at 'Lys-56' (H3K56ac). Highest levels are found in muscle, thymus, spleen, brain and heart (at protein level).

It is found in the nucleus. It localises to the chromosome. Its subcellular location is the telomere. The protein localises to the endoplasmic reticulum. It catalyses the reaction N(6)-acetyl-L-lysyl-[protein] + NAD(+) + H2O = 2''-O-acetyl-ADP-D-ribose + nicotinamide + L-lysyl-[protein]. The catalysed reaction is N(6)-tetradecanoyl-L-lysyl-[protein] + NAD(+) + H2O = 2''-O-tetradecanoyl-ADP-D-ribose + nicotinamide + L-lysyl-[protein]. The enzyme catalyses N(6)-hexadecanoyl-L-lysyl-[protein] + NAD(+) + H2O = 2''-O-hexadecanoyl-ADP-D-ribose + nicotinamide + L-lysyl-[protein]. It carries out the reaction L-lysyl-[protein] + NAD(+) = N(6)-(ADP-D-ribosyl)-L-lysyl-[protein] + nicotinamide + H(+). It catalyses the reaction L-arginyl-[protein] + NAD(+) = N(omega)-(ADP-D-ribosyl)-L-arginyl-[protein] + nicotinamide + H(+). With respect to regulation, compared to the defatty-acylase activity, the protein deacetylase activity is weak in vitro, and requires activation. The histone deacetylase activity is strongly activated upon binding to nucleosomes and chromatin in vivo. Two molecules of SIRT6 associate with the acidic patch of one nucleosome, while the C-terminal disordered region of SIRT6 associates with nucleosomal DNA, leading to efficient histone deacetylation. The protein-lysine deacetylase activity is also activated by long-chain free fatty-acids. NAD-dependent protein deacetylase, deacylase and mono-ADP-ribosyltransferase that plays an essential role in DNA damage repair, telomere maintenance, metabolic homeostasis, inflammation, tumorigenesis and aging. Displays protein-lysine deacetylase or defatty-acylase (demyristoylase and depalmitoylase) activity, depending on the context. Acts as a key histone deacetylase by catalyzing deacetylation of histone H3 at 'Lys-9', 'Lys-18' and 'Lys-56' (H3K9ac, H3K18ac and H3K56ac, respectively), suppressing target gene expression of several transcription factors, including NF-kappa-B. Acts as an inhibitor of transcription elongation by mediating deacetylation of H3K9ac and H3K56ac, preventing release of NELFE from chromatin and causing transcriptional pausing. Involved in DNA repair by promoting double-strand break (DSB) repair: acts as a DSB sensor by recognizing and binding DSB sites, leading to (1) recruitment of DNA repair proteins, such as SMARCA5/SNF2H, and (2) deacetylation of histone H3K9ac and H3K56ac. SIRT6 participation to DSB repair is probably involved in extension of life span. Also promotes DNA repair by deacetylating non-histone proteins, such as DDB2 and p53/TP53. Specifically deacetylates H3K18ac at pericentric heterochromatin, thereby maintaining pericentric heterochromatin silencing at centromeres and protecting against genomic instability and cellular senescence. Involved in telomere maintenance by catalyzing deacetylation of histone H3 in telomeric chromatin, regulating telomere position effect and telomere movement in response to DNA damage. Required for embryonic stem cell differentiation by mediating histone deacetylation of H3K9ac. Plays a major role in metabolism by regulating processes such as glycolysis, gluconeogenesis, insulin secretion and lipid metabolism. Inhibits glycolysis via histone deacetylase activity and by acting as a corepressor of the transcription factor HIF1A, thereby controlling the expression of multiple glycolytic genes. Has tumor suppressor activity by repressing glycolysis, thereby inhibiting the Warburg effect. Also regulates glycolysis and tumorigenesis by mediating deacetylation and nuclear export of non-histone proteins, such as isoform M2 of PKM (PKM2). Acts as a negative regulator of gluconeogenesis by mediating deacetylation of non-histone proteins, such as FOXO1 and KAT2A/GCN5. Promotes beta-oxidation of fatty acids during fasting by catalyzing deacetylation of NCOA2, inducing coactivation of PPARA. Acts as a regulator of lipid catabolism in brown adipocytes, both by catalyzing deacetylation of histones and non-histone proteins, such as FOXO1. Also acts as a regulator of circadian rhythms, both by regulating expression of clock-controlled genes involved in lipid and carbohydrate metabolism, and by catalyzing deacetylation of PER2. The defatty-acylase activity is specifically involved in regulation of protein secretion. Has high activity toward long-chain fatty acyl groups and mediates protein-lysine demyristoylation and depalmitoylation of target proteins, such as RRAS2 and TNF, thereby regulating their secretion. Also acts as a mono-ADP-ribosyltransferase by mediating mono-ADP-ribosylation of PARP1, TRIM28/KAP1 or SMARCC2/BAF170. Mono-ADP-ribosyltransferase activity is involved in DNA repair, cellular senescence, repression of LINE-1 retrotransposon elements and regulation of transcription. The protein is NAD-dependent protein deacylase sirtuin-6 of Mus musculus (Mouse).